The sequence spans 1963 residues: Myosin-4 (1963 aa).

Residues 28–77 (DSKKNVWIPDPEEGYLAGEITATKGDQVTIVTARGNEVTLKKELVQEMNP) enclose the Myosin N-terminal SH3-like domain. A Myosin motor domain is found at 81-787 (EKTEDMSNLS…VLAHLEDIRD (707 aa)). Lys-125 is subject to N6,N6,N6-trimethyllysine. 174-181 (GESGAGKT) is an ATP binding site. Actin-binding stretches follow at residues 662–684 (LNNL…IPNE) and 766–780 (RIGL…GVLA). The tract at residues 848–1161 (MLKAGKEAEE…LEELGEKLDE (314 aa)) is alpha-helical tailpiece (S2). Positions 848 to 1963 (MLKAGKEAEE…SPSRARASDF (1116 aa)) form a coiled coil. 2 stretches are compositionally biased toward basic and acidic residues: residues 970–988 (LRKA…RSLQ) and 1133–1146 (NERQ…RAKS). Disordered regions lie at residues 970–990 (LRKA…LQDE) and 1125–1146 (SELE…RAKS). The hinge stretch occupies residues 1162–1173 (QGGATAAQVEVN). Residues 1162–1963 (QGGATAAQVE…SPSRARASDF (802 aa)) are light meromyosin (LMM). Disordered regions lie at residues 1317-1336 (LTSQ…RERQ) and 1912-1963 (LEDA…ASDF). Over residues 1322–1336 (EEARRTADEEARERQ) the composition is skewed to basic and acidic residues.

This sequence belongs to the TRAFAC class myosin-kinesin ATPase superfamily. Myosin family. Muscle myosin is a hexameric protein that consists of 2 heavy chain subunits (MHC), 2 alkali light chain subunits (MLC) and 2 regulatory light chain subunits (MLC-2). Forms a complex composed of chaperone unc-45, unc-54 and ubiquitin-protein ligase ufd-2; promotes poly-ubiquitination of unfolded unc-54. Within the complex interacts with unc-45 (via UCS domain) and ufd-2. Interacts with itr-1 (via c-terminal coiled coil domain). In terms of processing, unfolded unc-54 is poly-ubiquitinated by ufd-2.

It is found in the cytoplasm. Its subcellular location is the myofibril. In terms of biological role, required for muscle contraction. The polypeptide is Myosin-4 (unc-54) (Caenorhabditis elegans).